Reading from the N-terminus, the 257-residue chain is Transmembrane protein 101 (257 aa).

Helical transmembrane passes span 21–40 (VLLT…LYAE), 52–72 (VPYL…MSFG), 77–97 (WFAL…YIGG), 110–130 (YSRT…AGEL), 139–159 (SLQS…AYSL), 182–202 (LFFV…YVTL), 206–226 (ILAV…AYWH), and 233–253 (FWNQ…AVIL).

It localises to the membrane. Its function is as follows. May activate NF-kappa-B signaling pathways. The chain is Transmembrane protein 101 (TMEM101) from Homo sapiens (Human).